A 397-amino-acid chain; its full sequence is Acetyl-CoA acetyltransferase, cytosolic (397 aa).

The residue at position 1 (M1) is an N-acetylmethionine. Residue C92 is the Acyl-thioester intermediate of the active site. At K200 the chain carries N6-acetyllysine. CoA contacts are provided by R223 and S226. An N6-acetyllysine mark is found at K233 and K235. S252 contacts CoA. Residue C383 is the Proton donor/acceptor of the active site.

This sequence belongs to the thiolase-like superfamily. Thiolase family. In terms of assembly, homotetramer.

The protein localises to the cytoplasm. It localises to the cytosol. The enzyme catalyses 2 acetyl-CoA = acetoacetyl-CoA + CoA. The protein operates within lipid metabolism; fatty acid metabolism. Involved in the biosynthetic pathway of cholesterol. The protein is Acetyl-CoA acetyltransferase, cytosolic (Acat2) of Rattus norvegicus (Rat).